Here is a 283-residue protein sequence, read N- to C-terminus: Protein/nucleic acid deglycase HchA (283 aa).

Positions 86, 91, and 123 each coordinate Zn(2+). The active-site Nucleophile is the Cys185.

The protein belongs to the peptidase C56 family. HchA subfamily. Homodimer.

It is found in the cytoplasm. The catalysed reaction is N(omega)-(1-hydroxy-2-oxopropyl)-L-arginyl-[protein] + H2O = lactate + L-arginyl-[protein] + H(+). It carries out the reaction N(6)-(1-hydroxy-2-oxopropyl)-L-lysyl-[protein] + H2O = lactate + L-lysyl-[protein] + H(+). The enzyme catalyses S-(1-hydroxy-2-oxopropyl)-L-cysteinyl-[protein] + H2O = lactate + L-cysteinyl-[protein] + H(+). It catalyses the reaction N(omega)-(1-hydroxy-2-oxoethyl)-L-arginyl-[protein] + H2O = L-arginyl-[protein] + glycolate + H(+). The catalysed reaction is N(6)-(1-hydroxy-2-oxoethyl)-L-lysyl-[protein] + H2O = glycolate + L-lysyl-[protein] + H(+). It carries out the reaction S-(1-hydroxy-2-oxoethyl)-L-cysteinyl-[protein] + H2O = glycolate + L-cysteinyl-[protein] + H(+). The enzyme catalyses N(2)-(1-hydroxy-2-oxopropyl)-dGTP + H2O = lactate + dGTP + H(+). It catalyses the reaction N(2)-(1-hydroxy-2-oxopropyl)-GTP + H2O = lactate + GTP + H(+). The catalysed reaction is N(2)-(1-hydroxy-2-oxopropyl)-GDP + H2O = lactate + GDP + H(+). It carries out the reaction N(2)-(1-hydroxy-2-oxopropyl)-GMP + H2O = lactate + GMP + H(+). The enzyme catalyses N(2)-(1-hydroxy-2-oxoethyl)-dGTP + H2O = dGTP + glycolate + H(+). It catalyses the reaction N(2)-(1-hydroxy-2-oxoethyl)-GTP + H2O = glycolate + GTP + H(+). The catalysed reaction is N(2)-(1-hydroxy-2-oxoethyl)-GDP + H2O = glycolate + GDP + H(+). It carries out the reaction N(2)-(1-hydroxy-2-oxoethyl)-GMP + H2O = glycolate + GMP + H(+). The enzyme catalyses an N(2)-(1-hydroxy-2-oxopropyl)-guanosine in RNA + H2O = a guanosine in RNA + lactate + H(+). It catalyses the reaction an N(2)-(1-hydroxy-2-oxopropyl)-2'-deoxyguanosine in DNA + H2O = a 2'-deoxyguanosine in DNA + lactate + H(+). The catalysed reaction is an N(2)-(1-hydroxy-2-oxoethyl)-guanosine in RNA + H2O = a guanosine in RNA + glycolate + H(+). It carries out the reaction an N(2)-(1-hydroxy-2-oxoethyl)-2'-deoxyguanosine in DNA + H2O = a 2'-deoxyguanosine in DNA + glycolate + H(+). Functionally, protein and nucleotide deglycase that catalyzes the deglycation of the Maillard adducts formed between amino groups of proteins or nucleotides and reactive carbonyl groups of glyoxals. Thus, functions as a protein deglycase that repairs methylglyoxal- and glyoxal-glycated proteins, and releases repaired proteins and lactate or glycolate, respectively. Deglycates cysteine, arginine and lysine residues in proteins, and thus reactivates these proteins by reversing glycation by glyoxals. Acts on early glycation intermediates (hemithioacetals and aminocarbinols), preventing the formation of Schiff bases and advanced glycation endproducts (AGE). Also functions as a nucleotide deglycase able to repair glycated guanine in the free nucleotide pool (GTP, GDP, GMP, dGTP) and in DNA and RNA. Is thus involved in a major nucleotide repair system named guanine glycation repair (GG repair), dedicated to reversing methylglyoxal and glyoxal damage via nucleotide sanitization and direct nucleic acid repair. Plays an important role in protecting cells from carbonyl stress. The protein is Protein/nucleic acid deglycase HchA of Escherichia coli O45:K1 (strain S88 / ExPEC).